Consider the following 293-residue polypeptide: Porphobilinogen deaminase (293 aa).

Residue cysteine 235 is modified to S-(dipyrrolylmethanemethyl)cysteine.

It belongs to the HMBS family. In terms of assembly, monomer. Requires dipyrromethane as cofactor.

It catalyses the reaction 4 porphobilinogen + H2O = hydroxymethylbilane + 4 NH4(+). It participates in porphyrin-containing compound metabolism; protoporphyrin-IX biosynthesis; coproporphyrinogen-III from 5-aminolevulinate: step 2/4. Tetrapolymerization of the monopyrrole PBG into the hydroxymethylbilane pre-uroporphyrinogen in several discrete steps. The polypeptide is Porphobilinogen deaminase (Ruminiclostridium cellulolyticum (strain ATCC 35319 / DSM 5812 / JCM 6584 / H10) (Clostridium cellulolyticum)).